Here is a 201-residue protein sequence, read N- to C-terminus: Small ribosomal subunit protein uS10m (201 aa).

Belongs to the universal ribosomal protein uS10 family. Component of the mitochondrial ribosome small subunit (28S) which comprises a 12S rRNA and about 30 distinct proteins.

It localises to the mitochondrion. This is Small ribosomal subunit protein uS10m (MRPS10) from Pongo abelii (Sumatran orangutan).